Reading from the N-terminus, the 82-residue chain is Large ribosomal subunit protein bL27 (82 aa).

The disordered stretch occupies residues 1–20 (MAHKKGASSSRNGRDSNPQY). A compositionally biased stretch (polar residues) spans 7–19 (ASSSRNGRDSNPQ).

Belongs to the bacterial ribosomal protein bL27 family.

The protein is Large ribosomal subunit protein bL27 of Bifidobacterium longum (strain NCC 2705).